A 138-amino-acid polypeptide reads, in one-letter code: Cysteine desulfuration protein SufE (138 aa).

Catalysis depends on cysteine 51, which acts as the Cysteine persulfide intermediate.

It belongs to the SufE family. As to quaternary structure, homodimer. Interacts with SufS.

The protein resides in the cytoplasm. It functions in the pathway cofactor biosynthesis; iron-sulfur cluster biosynthesis. Functionally, participates in cysteine desulfuration mediated by SufS. Cysteine desulfuration mobilizes sulfur from L-cysteine to yield L-alanine and constitutes an essential step in sulfur metabolism for biosynthesis of a variety of sulfur-containing biomolecules. Functions as a sulfur acceptor for SufS, by mediating the direct transfer of the sulfur atom from the S-sulfanylcysteine of SufS, an intermediate product of cysteine desulfuration process. The polypeptide is Cysteine desulfuration protein SufE (Shigella boydii serotype 18 (strain CDC 3083-94 / BS512)).